Reading from the N-terminus, the 393-residue chain is Iripin-5 (393 aa).

An N-terminal signal peptide occupies residues 1–16 (MKTLIVLMCSLVVVWA). 2 N-linked (GlcNAc...) asparagine glycosylation sites follow: asparagine 198 and asparagine 245.

The protein belongs to the serpin family. As to expression, highly expressed in female salivary gland during blood feeding. Expressed in female midgut and ovary during blood feeding.

It localises to the secreted. Serine protease inhibitor that modulates blood feeding of ticks on vertebrate species. Inhibits host neutrophil elastase (ELANE) and proteinase 3/myeloblastin (PRTN3). Moderately inhibits host chymase, cathepsin G (CTSG), trypsin and alpha-chymotrypsin. Decreases host neutrophil migration. Decreases nitric oxide production by host macrophages. Decreases host complement activity. This Ixodes ricinus (Common tick) protein is Iripin-5.